The primary structure comprises 238 residues: Small ribosomal subunit protein uS2 (238 aa).

The protein belongs to the universal ribosomal protein uS2 family.

The sequence is that of Small ribosomal subunit protein uS2 from Prochlorococcus marinus (strain MIT 9211).